The following is a 103-amino-acid chain: Large ribosomal subunit protein uL24 (103 aa).

The protein belongs to the universal ribosomal protein uL24 family. As to quaternary structure, part of the 50S ribosomal subunit.

One of two assembly initiator proteins, it binds directly to the 5'-end of the 23S rRNA, where it nucleates assembly of the 50S subunit. In terms of biological role, one of the proteins that surrounds the polypeptide exit tunnel on the outside of the subunit. This chain is Large ribosomal subunit protein uL24, found in Halalkalibacterium halodurans (strain ATCC BAA-125 / DSM 18197 / FERM 7344 / JCM 9153 / C-125) (Bacillus halodurans).